Reading from the N-terminus, the 410-residue chain is Peptidase T-like protein YPO1009/y3403/YP_3421 (410 aa).

A Zn(2+)-binding site is contributed by H82. Residue D84 is part of the active site. D144 lines the Zn(2+) pocket. Catalysis depends on E176, which acts as the Proton acceptor. The Zn(2+) site is built by E177, D200, and H382.

The protein belongs to the peptidase M20B family. Zn(2+) serves as cofactor.

The sequence is that of Peptidase T-like protein YPO1009/y3403/YP_3421 from Yersinia pestis.